A 99-amino-acid polypeptide reads, in one-letter code: Integration host factor subunit alpha (99 aa).

Belongs to the bacterial histone-like protein family. Heterodimer of an alpha and a beta chain.

Functionally, this protein is one of the two subunits of integration host factor, a specific DNA-binding protein that functions in genetic recombination as well as in transcriptional and translational control. This Alteromonas mediterranea (strain DSM 17117 / CIP 110805 / LMG 28347 / Deep ecotype) protein is Integration host factor subunit alpha.